The sequence spans 365 residues: Deoxyribonuclease-2-alpha (365 aa).

Residues 1–19 (MATLSSLLLTALLWVPVGT) form the signal peptide. Residues cysteine 22 and cysteine 162 are joined by a disulfide bond. N-linked (GlcNAc...) asparagine glycans are attached at residues asparagine 215, asparagine 269, and asparagine 293. Intrachain disulfides connect cysteine 270-cysteine 348 and cysteine 311-cysteine 330. Residue histidine 298 is part of the active site.

This sequence belongs to the DNase II family.

It is found in the lysosome. The enzyme catalyses Endonucleolytic cleavage to nucleoside 3'-phosphates and 3'-phosphooligonucleotide end-products.. Functionally, hydrolyzes DNA under acidic conditions with a preference for double-stranded DNA. Plays a major role in the clearance of nucleic acids generated through apoptosis, hence preventing autoinflammation. Necessary for proper fetal development and for definitive erythropoiesis in fetal liver and bone marrow, where it degrades nuclear DNA expelled from erythroid precursor cells. This chain is Deoxyribonuclease-2-alpha (DNASE2), found in Bos taurus (Bovine).